A 326-amino-acid polypeptide reads, in one-letter code: Beta-ketoacyl-[acyl-carrier-protein] synthase III (326 aa).

Active-site residues include Cys112 and His251. The ACP-binding stretch occupies residues 252-256 (QANSR). The active site involves Asn281.

The protein belongs to the thiolase-like superfamily. FabH family. As to quaternary structure, homodimer.

It is found in the cytoplasm. The enzyme catalyses malonyl-[ACP] + acetyl-CoA + H(+) = 3-oxobutanoyl-[ACP] + CO2 + CoA. Its pathway is lipid metabolism; fatty acid biosynthesis. Catalyzes the condensation reaction of fatty acid synthesis by the addition to an acyl acceptor of two carbons from malonyl-ACP. Catalyzes the first condensation reaction which initiates fatty acid synthesis and may therefore play a role in governing the total rate of fatty acid production. Possesses both acetoacetyl-ACP synthase and acetyl transacylase activities. Its substrate specificity determines the biosynthesis of branched-chain and/or straight-chain of fatty acids. The protein is Beta-ketoacyl-[acyl-carrier-protein] synthase III of Clostridium botulinum (strain Okra / Type B1).